The following is a 925-amino-acid chain: Aspulvinone E synthetase melA (925 aa).

The tract at residues 11 to 434 (ETAAARNGDG…GGRAKETIII (424 aa)) is adenylation (A) domain. One can recognise a Carrier domain in the interval 564–644 (SPKNDFEKGL…ELAAALDNLY (81 aa)). An O-(pantetheine 4'-phosphoryl)serine modification is found at Ser-601. The tract at residues 663-923 (PLWLVHPGAG…KILRSALAER (261 aa)) is thioesterase (TE) domain.

Belongs to the ATP-dependent AMP-binding enzyme family.

It is found in the cytoplasm. Its function is as follows. Nonribosomal peptide synthase; part of the gene cluster that mediates the biosynthesis of Asp-melanin, a pigment that confers resistance against UV light and hampers phagocytosis by soil amoeba. The nonribosomal peptide synthase melA converts 4-hydroxyphenylpyruvate (4-HPPA) to aspulvinone E. The tyrosinase tyrP then performs hydroxylations of both aromatic moieties of aspulvinone E. The product of tyrP is highly unstable, and, due to the high reactivity of methides and ortho-diquinones, the polymeric Asp-melanin forms spontaneously. This Aspergillus terreus protein is Aspulvinone E synthetase melA.